Here is a 516-residue protein sequence, read N- to C-terminus: Effector protein hopAB1 (516 aa).

Disordered stretches follow at residues 1–93 and 175–259; these read MSGI…AQPA and RALA…DEAL. The span at 16–30 shows a compositional bias: basic and acidic residues; the sequence is WRADDEPVTERERDS. The span at 31 to 41 shows a compositional bias: polar residues; it reads SSGANLTNSPQ. Residues 81 to 90 show a composition bias toward pro residues; it reads PVEPRQPPEA. Low complexity-rich tracts occupy residues 183-196 and 212-224; these read PAPS…SRSS and QTSS…SSTS.

Belongs to the HopAB family.

The protein resides in the secreted. Effector protein that plays different roles depending on the species and plant cultivars that interact with the pathogen. Acts as a virulence determinant by enhancing the development of disease symptoms and bacterial growth. Acts as an avirulence factor by eliciting hypersensitive response (HR) and plant resistance. This is Effector protein hopAB1 (hopAB1) from Pseudomonas syringae pv. syringae (strain B728a).